A 415-amino-acid chain; its full sequence is Serine hydroxymethyltransferase (415 aa).

(6S)-5,6,7,8-tetrahydrofolate contacts are provided by residues Leu-119 and 123 to 125; that span reads GHL. Lys-228 carries the N6-(pyridoxal phosphate)lysine modification. 353 to 355 lines the (6S)-5,6,7,8-tetrahydrofolate pocket; sequence SAF.

This sequence belongs to the SHMT family. In terms of assembly, homodimer. It depends on pyridoxal 5'-phosphate as a cofactor.

It localises to the cytoplasm. The enzyme catalyses (6R)-5,10-methylene-5,6,7,8-tetrahydrofolate + glycine + H2O = (6S)-5,6,7,8-tetrahydrofolate + L-serine. The protein operates within one-carbon metabolism; tetrahydrofolate interconversion. Its pathway is amino-acid biosynthesis; glycine biosynthesis; glycine from L-serine: step 1/1. In terms of biological role, catalyzes the reversible interconversion of serine and glycine with tetrahydrofolate (THF) serving as the one-carbon carrier. Also exhibits THF-independent aldolase activity toward beta-hydroxyamino acids, producing glycine and aldehydes, via a retro-aldol mechanism. This is Serine hydroxymethyltransferase from Halobacterium salinarum (strain ATCC 29341 / DSM 671 / R1).